The following is a 53-amino-acid chain: Light-harvesting protein B-800/820 alpha chain (53 aa).

The Cytoplasmic portion of the chain corresponds to 1–14; sequence MNQGKIWTVVNPAV. Residues 15-35 form a helical membrane-spanning segment; it reads GLPLLLGSVAITALLVHLAVL. His31 provides a ligand contact to a bacteriochlorophyll. Residues 36–53 are Periplasmic-facing; sequence THTTWFPAFTQGGLKKAA.

This sequence belongs to the antenna complex alpha subunit family. In terms of assembly, the core complex is formed by different alpha and beta chains, binding bacteriochlorophyll molecules, and arranged most probably in tetrameric structures disposed around the reaction center. The non-pigmented gamma chains may constitute additional components.

It is found in the cell inner membrane. In terms of biological role, antenna complexes are light-harvesting systems, which transfer the excitation energy to the reaction centers. The polypeptide is Light-harvesting protein B-800/820 alpha chain (Rhodoblastus acidophilus (Rhodopseudomonas acidophila)).